We begin with the raw amino-acid sequence, 345 residues long: Arginine N-succinyltransferase (345 aa).

Leu125 contacts succinyl-CoA. His229 functions as the Proton donor in the catalytic mechanism.

The protein belongs to the arginine N-succinyltransferase family.

The enzyme catalyses succinyl-CoA + L-arginine = N(2)-succinyl-L-arginine + CoA + H(+). It participates in amino-acid degradation; L-arginine degradation via AST pathway; L-glutamate and succinate from L-arginine: step 1/5. Catalyzes the transfer of succinyl-CoA to arginine to produce N(2)-succinylarginine. This Yersinia enterocolitica serotype O:8 / biotype 1B (strain NCTC 13174 / 8081) protein is Arginine N-succinyltransferase.